A 241-amino-acid chain; its full sequence is Hydantoin racemase (241 aa).

This sequence belongs to the HyuE racemase family. In terms of assembly, homotetramer.

The enzyme catalyses a D-5-monosubstituted hydantoin = a L-5-monosubstituted hydantoin. It catalyses the reaction D-5-benzylhydantoin = L-5-benzylhydantoin. The catalysed reaction is D-5-isobutylhydantoin = L-5-isobutylhydantoin. With respect to regulation, inhibited by Cu(2+), Hg(2+), Pb(2+) and Zn(2+). The activity is twofold lower in the presence of Mn(2+), Co(2+) and Ni(2+). The insignificant effect of the metal chelating agent EDTA on the hydantoin racemase activity would indicate that it is not a metalloenzyme. Its function is as follows. May be involved in the asymmetric conversion of racemic 5-substituted hydantoins to the corresponding L-amino acids. Catalyzes the racemization via enolization of D- and L-5-monosubstituted hydantoins. The sequence is that of Hydantoin racemase from Rhizobium meliloti (Ensifer meliloti).